The primary structure comprises 56 residues: MAVQQNKSTRSKRGMRRSHHALRSVTISVDRTSGETHRRHCVTFDGFYRGRKMIEK.

Residues 1–35 form a disordered region; sequence MAVQQNKSTRSKRGMRRSHHALRSVTISVDRTSGE. Positions 9–22 are enriched in basic residues; the sequence is TRSKRGMRRSHHAL.

Belongs to the bacterial ribosomal protein bL32 family.

The protein is Large ribosomal subunit protein bL32 of Blochmanniella pennsylvanica (strain BPEN).